Here is a 2103-residue protein sequence, read N- to C-terminus: Orsellinic acid synthase (2103 aa).

The segment at 17-232 (DAVHDLNVRS…KRPELAHATI (216 aa)) is N-terminal acylcarrier protein transacylase domain (SAT). The Ketosynthase family 3 (KS3) domain maps to 348–782 (ADAIAVVGMS…GGNVSMLLQD (435 aa)). Active-site for beta-ketoacyl synthase activity residues include Cys-525, His-660, and His-702. The segment at 881–1197 (VFTFTGQGAQ…RRGGDDWQSV (317 aa)) is malonyl-CoA:ACP transacylase (MAT) domain. Catalysis depends on Ser-973, which acts as the For acyl/malonyl transferase activity. The tract at residues 1272 to 1409 (HAVEKLQREE…GQPDSAVRRD (138 aa)) is N-terminal hotdog fold. The region spanning 1272 to 1582 (HAVEKLQREE…FKKLERDFFA (311 aa)) is the PKS/mFAS DH domain. Residues 1303–1579 (GHVVDESAIC…DICFKKLERD (277 aa)) form a product template (PT) domain region. The active-site Proton acceptor; for dehydratase activity is the His-1304. Residues 1433–1582 (VHAMDTALFY…FKKLERDFFA (150 aa)) form a C-terminal hotdog fold region. Asp-1493 serves as the catalytic Proton donor; for dehydratase activity. A disordered region spans residues 1592–1638 (STKPVAAAPAKSMAKRARQLAPSPSPSSSSGSNTPMSRSPTPSSVSD). 2 stretches are compositionally biased toward low complexity: residues 1594-1603 (KPVAAAPAKS) and 1617-1631 (PSSSSGSNTPMSRSP). Carrier domains follow at residues 1640–1716 (VDLG…GGSA) and 1741–1815 (PAPS…DDDA). Residue Ser-1676 is modified to O-(pantetheine 4'-phosphoryl)serine. The disordered stretch occupies residues 1722-1743 (EDITKPTPSPEQTQARKQGPAP). The residue at position 1775 (Ser-1775) is an O-(pantetheine 4'-phosphoryl)serine. The tract at residues 1809-1838 (EALDDDAEEESAPAQTSTNPAKETTIDSSR) is disordered. Positions 1810–1819 (ALDDDAEEES) are enriched in acidic residues. Residues 1823–1836 (QTSTNPAKETTIDS) show a composition bias toward polar residues. Residues 1849–2082 (ASYIHLKALP…TVNGDHFSMM (234 aa)) form a thioesterase (TE) domain region.

It carries out the reaction 3 malonyl-CoA + acetyl-CoA + 2 H(+) = orsellinate + 3 CO2 + 4 CoA. It functions in the pathway secondary metabolite biosynthesis. Non-reducing polyketide synthase; part of the gene cluster that mediates the biosynthesis of orsellinic acid, as well as of the cathepsin K inhibitors F9775 A and F9775 B. The non-reducing polyketide synthase orsA produces orsellinic acid by condensing acetyl-CoA with 3 malonyl-CoA units. Further modifications by the decarboxylase orsB and the tyrosinase-like protein orsC lead to the production of F9775 A and F9775 B. The functions of orsD and orsE remain unclear since only orsB and orsC are required to convert orsellinic acid into F9775 A and F9775 B. The sequence is that of Orsellinic acid synthase from Emericella nidulans (strain FGSC A4 / ATCC 38163 / CBS 112.46 / NRRL 194 / M139) (Aspergillus nidulans).